A 127-amino-acid chain; its full sequence is DNA-directed RNA polymerase subunit omega (127 aa).

Belongs to the RNA polymerase subunit omega family. The RNAP catalytic core consists of 2 alpha, 1 beta, 1 beta' and 1 omega subunit. When a sigma factor is associated with the core the holoenzyme is formed, which can initiate transcription.

It carries out the reaction RNA(n) + a ribonucleoside 5'-triphosphate = RNA(n+1) + diphosphate. Its function is as follows. Promotes RNA polymerase assembly. Latches the N- and C-terminal regions of the beta' subunit thereby facilitating its interaction with the beta and alpha subunits. The chain is DNA-directed RNA polymerase subunit omega from Rickettsia africae (strain ESF-5).